A 193-amino-acid polypeptide reads, in one-letter code: Coiled-coil domain-containing protein 184 (193 aa).

A coiled-coil region spans residues 39-68 (GMKELMEHLKAQLQALFEDVRAMRGALDEQ). The segment at 101–176 (GLGVAGGKGS…LGENGPLVEP (76 aa)) is disordered. The span at 135 to 146 (PDEEDEEEEEEK) shows a compositional bias: acidic residues.

This chain is Coiled-coil domain-containing protein 184 (Ccdc184), found in Rattus norvegicus (Rat).